The sequence spans 499 residues: Glycerol kinase (499 aa).

ADP is bound at residue Thr12. Residues Thr12, Thr13, and Ser14 each coordinate ATP. Residue Thr12 participates in sn-glycerol 3-phosphate binding. Arg16 is a binding site for ADP. Sn-glycerol 3-phosphate-binding residues include Arg82, Glu83, Tyr134, and Asp240. 5 residues coordinate glycerol: Arg82, Glu83, Tyr134, Asp240, and Gln241. Residues Thr262 and Gly306 each contribute to the ADP site. The ATP site is built by Thr262, Gly306, Gln310, and Gly412. ADP is bound by residues Gly412 and Asn416.

Belongs to the FGGY kinase family.

It catalyses the reaction glycerol + ATP = sn-glycerol 3-phosphate + ADP + H(+). Its pathway is polyol metabolism; glycerol degradation via glycerol kinase pathway; sn-glycerol 3-phosphate from glycerol: step 1/1. Inhibited by fructose 1,6-bisphosphate (FBP). In terms of biological role, key enzyme in the regulation of glycerol uptake and metabolism. Catalyzes the phosphorylation of glycerol to yield sn-glycerol 3-phosphate. In Nocardia farcinica (strain IFM 10152), this protein is Glycerol kinase.